The sequence spans 437 residues: Phosphomethylpyrimidine synthase (437 aa).

Substrate contacts are provided by residues N69, M98, Y127, H163, 185-187 (SRG), 226-229 (DACR), and E265. H269 lines the Zn(2+) pocket. Residue Y292 participates in substrate binding. Residue H333 participates in Zn(2+) binding. [4Fe-4S] cluster contacts are provided by C409, C412, and C416.

This sequence belongs to the ThiC family. [4Fe-4S] cluster is required as a cofactor.

The catalysed reaction is 5-amino-1-(5-phospho-beta-D-ribosyl)imidazole + S-adenosyl-L-methionine = 4-amino-2-methyl-5-(phosphooxymethyl)pyrimidine + CO + 5'-deoxyadenosine + formate + L-methionine + 3 H(+). Its pathway is cofactor biosynthesis; thiamine diphosphate biosynthesis. Functionally, catalyzes the synthesis of the hydroxymethylpyrimidine phosphate (HMP-P) moiety of thiamine from aminoimidazole ribotide (AIR) in a radical S-adenosyl-L-methionine (SAM)-dependent reaction. This Clostridium botulinum (strain 657 / Type Ba4) protein is Phosphomethylpyrimidine synthase.